A 335-amino-acid chain; its full sequence is Protein-arginine kinase (335 aa).

The Phosphagen kinase C-terminal domain occupies 21–244 (IVMSSRIRLA…NQIIHEEKQI (224 aa)). Residues 24 to 28 (SSRIR), H82, R115, 166 to 170 (RASVM), and 197 to 202 (RGIYGE) each bind ATP.

This sequence belongs to the ATP:guanido phosphotransferase family.

The enzyme catalyses L-arginyl-[protein] + ATP = N(omega)-phospho-L-arginyl-[protein] + ADP + H(+). Functionally, catalyzes the specific phosphorylation of arginine residues in proteins. The protein is Protein-arginine kinase of Staphylococcus aureus (strain USA300).